A 2276-amino-acid chain; its full sequence is MARRVNKKKSPVKAARKIDGQIGRRVVDGVRAKSSRQRHQAVLYQAPTPTVIRRKTTKTAIVKKTVVVVKKGGKVVKKSSKTGQKVKAVKAPKVKAPSKKGNDRLTPRVITEYQENPFFYDPQVPEYISASVYHRWITRAVRNGNMKEIKDYYKSKKCQKSAIYTSFAYSFDTSACDEALRQDIKFATEFFKMNNKMEVDNSYHPGKEPNLLQKKTTGRKNYYMLGRHTRQIEMGRGGKEGNNALLNYDTRTDEPNPLTKLIEDNVTYTKLYQLCKIPDGPIVEHHIEMHFVTAVRMGHRDLASALAQGPVKMHCNDLHRATLKDQKLPAKILPVSVAKKAYMNKNITPLHTAAISNSTHMLEAMRAVYPTINIPDQDNWYTMHYAACAPGTAPMEFLLKNGGSVTMLTKQTETPLHVAARAGRAVNCTFLMKEMLDLEKGDDGESTIRADRSIINARTRSGNSALHLAVLRNNLDVVDALLAEPTIVVDNPTSTGQNRLTPLMMACGKGYLEMAKKLVEKGALVEGKDKKKRTPLIHAMLNGQIHTAAFLLAKGASLTLADSSGNTAAHYAAAYGFLDCLKLLASIDDNILSEPNDWQLYPLSVAYLKGHYGIVTWLLEGPHKDKANINAKDNNGATLLSNLLSYADETMHKELLSQIEYLVARKADASLADSSGQTPLHLFSMQRIILKGSGEAAENDAMRMTLDNYKKCFNTLIKAGAKVDVYDHEDNTPLHYALTNGNLMLFNLMLDKVANKRNLFEKWANHQNFLHEILALPMKVYGDQVLWKGETLTKPAYDVLPILKELHENLPDLFEKWISEVNKAGYSPIVEAIKQYQALAANKKLRGEADQNGNPGFGNAIARGRVHNQFGRDRMNQSQAPHCDSYELKTFISTVNELFEWVIRLGPFQLTQKYINSENSAAVTLANLAMSIPIECGRHQQNQLALFKILIKLSKEFNKVDEFLTQKNEKDDVLIVQAIMFDKPNVVELILDTASEMHLIHGTHNAIKENELEVVVHKTIIMYMIEMRMWELIPKVNASSEFWKSKDAKGNSVWHYAARVNSHKTVGLFKMIESKGVRRETNDDGRSVLHVATLACDGSADSVLEPIAWLSTRCPIDAVDKFNRTALHYAFGNENDFKEGNVPFGESDPIAVVSLLSSLIRPEQIEIADVNGNTILHLAAIKNSTICLMTLIRKKCHVDLKNKDGNTPLALAVHHGRQSSALTLIQANADVTEKIFVPALKPTSDFDQNSSGTEAEKFWKWHGKEKKVLEDLHTTIPASVVSKGGSWEAMVYVLLDVLGQNTGSMAQLTDAALRRGQLNLANQLLKSIEALIDGAVLNSSYDLLDTFAEKCFGALTSEETIEKTVLNRIILTRGLGLKQPETMKIIRTALQNGNWNLLNFLKSEMGTAWKNQKIETPTENPIRSLLIYMNEKSVSSEAIGFLEELRQMRGVNIDALCQLEIPGKFKKILDYGLIPPISFAVLQENPNMIRALRNAGASLKTQDDYGRTPLMYAIMTNNRSVVDAIVGDGKLAVVLHKQKAVATGPRCVAVPMRFGATSRAFIPAAAFASVPARVESDEEEEDNSGSESGEDGAASENKSEHGSENGESGNGSDDEDDDDDDSSPPPAKKSRIAKEAAGPSTGPKRKKLVITDPSLFSARDHKENNPLHYFIEPLAWENVELLGDLAAANKTAIVQCLIDKRSPNPIELAAMKMNRRMKSEMLKIVKNAAFPRPIKETKLTLQQVHIEPLSDVDEDAAKFLAKWVEEKDKKKTSEAPKPHKSSTYSTNGLVSFCDETQQYFDVLMNKTDLMYGRCGFHNFYRMQIIKRRDAELFILFTNWGRIGSGMGEFQTTPFNSLELAAKEFKSIFKSKSGNEWAPLANFRDMPKKYRLVETDSTPTSLAEIELTWKKNTEKDPIRRMIADISDAKTLKTYASQVQMYGGSSQPFGRFTKENIEKAKLVLDKLEKNANRIKQMVEAQTGVVESNLLDAYITTSELSGDYYSLIPSGEYEFSNLTRLDNVEEIARHRARLNRCQEIETATRLLCAAEFRQDLDRVDYIRSAIQCEYRLETPDSDISQRLLQWIHNSGGKQAKVKMILEISPMLSTEKFEPFVNDDNQKFLWHGTKATNLMSILKNGFLIDPPSACKNGNLFGSGIYLADSFEKSTHYCQPSAGGINYMLVCQTALGKVRTLDTIPYHYMNQSSSSAEKYEDTLHYIGDRFPAGSLTNDGVGMPLLPLRKRDPIQGSNYGFGTLDFSEYIVRNPNRVLPKYIVMYK.

Basic residues-rich tracts occupy residues 1 to 15 and 87 to 98; these read MARR…VKAA and KAVKAPKVKAPS. Disordered stretches follow at residues 1 to 20 and 79 to 103; these read MARR…KIDG and SSKT…KGND. ANK repeat units follow at residues 345–374, 378–407, 411–440, 461–490, 498–527, 531–560, 564–593, 598–627, 675–725, 729–758, 970–999, 1171–1200, 1204–1233, 1472–1501, and 1505–1535; these read KNIT…TINI, DNWY…SVTM, QTET…DLEK, SGNS…IVVD, NRLT…LVEG, KKRT…SLTL, SGNT…NILS, WQLY…KDKA, SGQT…KVDV, EDNT…NKRN, KDDV…EMHL, NGNT…HVDL, DGNT…DVTE, GLIP…SLKT, and YGRT…AVVL. Residues 1570–1649 form a disordered region; that stretch reads VPARVESDEE…STGPKRKKLV (80 aa). Composition is skewed to acidic residues over residues 1576 to 1590 and 1612 to 1622; these read SDEE…ESGE and SDDEDDDDDDS. Residues 1662–1706 form an ANK 16 repeat; it reads KENNPLHYFIEPLAWENVELLGDLAAANKTAIVQCLIDKRSPNPI. The region spanning 1788–1889 is the WGR domain; the sequence is GLVSFCDETQ…ANFRDMPKKY (102 aa). Residues 1910-2045 enclose the PARP alpha-helical domain; it reads KNTEKDPIRR…EIETATRLLC (136 aa). The region spanning 2047–2276 is the PARP catalytic domain; it reads AEFRQDLDRV…VLPKYIVMYK (230 aa).

Expressed throughout the head and tail, in germ cells and somatic cells.

Its subcellular location is the nucleus. The protein localises to the chromosome. It carries out the reaction NAD(+) + (ADP-D-ribosyl)n-acceptor = nicotinamide + (ADP-D-ribosyl)n+1-acceptor + H(+).. It catalyses the reaction L-aspartyl-[protein] + NAD(+) = 4-O-(ADP-D-ribosyl)-L-aspartyl-[protein] + nicotinamide. The catalysed reaction is L-glutamyl-[protein] + NAD(+) = 5-O-(ADP-D-ribosyl)-L-glutamyl-[protein] + nicotinamide. Its function is as follows. Poly[ADP-ribose] polymerases modify various nuclear proteins by poly(ADP-ribosyl)ation, a post-translational modification synthesized after DNA damage that appears as an obligatory step in a detection/signaling pathway leading to the reparation of DNA strand breaks and programmed cell death. The protein is Poly [ADP-ribose] polymerase tankyrase of Caenorhabditis elegans.